Consider the following 132-residue polypeptide: Agouti-related protein (132 aa).

The first 20 residues, 1–20 (MLTAAVLSCALLLALPATRG), serve as a signal peptide directing secretion. A propeptide spanning residues 21–82 (AQMGLAPMEG…VLDLQDREPR (62 aa)) is cleaved from the precursor. Cystine bridges form between C87-C102, C94-C108, C101-C119, C105-C129, and C110-C117. The region spanning 87 to 129 (CVRLHESCLGQQVPCCDPCATCYCRFFNAFCYCRKLGTAMNPC) is the Agouti domain. The tract at residues 111–113 (RFF) is interaction with melanocortin receptors.

Interacts with melanocortin receptors MC3R, MC4R and MC5R. Expressed primarily in the adrenal gland, subthalamic nucleus, and hypothalamus, with a lower level of expression occurring in testis, lung, and kidney.

It is found in the secreted. Its subcellular location is the golgi apparatus lumen. Its function is as follows. Plays a role in weight homeostasis. Involved in the control of feeding behavior through the central melanocortin system. Acts as alpha melanocyte-stimulating hormone antagonist by inhibiting cAMP production mediated by stimulation of melanocortin receptors within the hypothalamus and adrenal gland. Has very low activity with MC5R. Is an inverse agonist for MC3R and MC4R being able to suppress their constitutive activity. It promotes MC3R and MC4R endocytosis in an arrestin-dependent manner. The polypeptide is Agouti-related protein (AGRP) (Homo sapiens (Human)).